The chain runs to 182 residues: Superoxide dismutase [Cu-Zn] (182 aa).

The signal sequence occupies residues Met-1 to Ala-19. A lipid anchor (N-palmitoyl cysteine) is attached at Cys-20. Cys-20 is lipidated: S-diacylglycerol cysteine. Cu cation contacts are provided by His-69, His-71, and His-95. A disulfide bridge links Cys-76 with Cys-175. The disordered stretch occupies residues Ala-91 to Asp-118. Zn(2+) is bound by residues His-95, His-104, His-115, and Asp-118. Basic and acidic residues predominate over residues His-102–His-115.

The protein belongs to the Cu-Zn superoxide dismutase family. The cofactor is Cu cation. Requires Zn(2+) as cofactor.

It is found in the cell membrane. The enzyme catalyses 2 superoxide + 2 H(+) = H2O2 + O2. Functionally, destroys radicals which are normally produced within the cells and which are toxic to biological systems. The chain is Superoxide dismutase [Cu-Zn] (sodC) from Deinococcus radiodurans (strain ATCC 13939 / DSM 20539 / JCM 16871 / CCUG 27074 / LMG 4051 / NBRC 15346 / NCIMB 9279 / VKM B-1422 / R1).